The sequence spans 546 residues: CTP synthase (546 aa).

The interval 1–269 (MNSNTKIIFV…DAKLVELLNL (269 aa)) is amidoligase domain. CTP is bound at residue Ser-16. Ser-16 contacts UTP. ATP contacts are provided by residues 17–22 (SLGKGV) and Asp-74. Residues Asp-74 and Glu-143 each contribute to the Mg(2+) site. CTP is bound by residues 150-152 (DIE), 190-195 (KTKPTQ), and Lys-226. Residues 190-195 (KTKPTQ) and Lys-226 contribute to the UTP site. In terms of domain architecture, Glutamine amidotransferase type-1 spans 294–546 (TIAMVGKYVS…IQAAIENSNN (253 aa)). Position 356 (Gly-356) interacts with L-glutamine. Cys-383 serves as the catalytic Nucleophile; for glutamine hydrolysis. L-glutamine contacts are provided by residues 384 to 387 (LGMQ), Glu-407, and Arg-474. Active-site residues include His-519 and Glu-521.

It belongs to the CTP synthase family. As to quaternary structure, homotetramer.

It catalyses the reaction UTP + L-glutamine + ATP + H2O = CTP + L-glutamate + ADP + phosphate + 2 H(+). The catalysed reaction is L-glutamine + H2O = L-glutamate + NH4(+). It carries out the reaction UTP + NH4(+) + ATP = CTP + ADP + phosphate + 2 H(+). The protein operates within pyrimidine metabolism; CTP biosynthesis via de novo pathway; CTP from UDP: step 2/2. With respect to regulation, allosterically activated by GTP, when glutamine is the substrate; GTP has no effect on the reaction when ammonia is the substrate. The allosteric effector GTP functions by stabilizing the protein conformation that binds the tetrahedral intermediate(s) formed during glutamine hydrolysis. Inhibited by the product CTP, via allosteric rather than competitive inhibition. Functionally, catalyzes the ATP-dependent amination of UTP to CTP with either L-glutamine or ammonia as the source of nitrogen. Regulates intracellular CTP levels through interactions with the four ribonucleotide triphosphates. The protein is CTP synthase of Francisella tularensis subsp. mediasiatica (strain FSC147).